We begin with the raw amino-acid sequence, 476 residues long: Serine/threonine-protein kinase PBL36 (476 aa).

Positions 126–412 (FRPESLLGEG…VEALKPLPNL (287 aa)) constitute a Protein kinase domain. Residues 132-140 (LGEGGFGCV) and Lys164 contribute to the ATP site. Tyr209 carries the phosphotyrosine modification. Residue Asp259 is the Proton acceptor of the active site. 2 positions are modified to phosphoserine: Ser263 and Ser293. 2 positions are modified to phosphothreonine: Thr294 and Thr299. Tyr307 carries the phosphotyrosine modification. The interval 431–476 (NGVRTQGGGFVSRNGPPMRSLSSLNLPQASPYRYARQSPKPKGKEP) is disordered.

Belongs to the protein kinase superfamily. Ser/Thr protein kinase family. As to quaternary structure, interacts with SD129. In terms of processing, phosphorylated by SD129 in response to the pathogen-associated molecular pattern (PAMP) 3-OH-C10:0, a medium-chain 3-hydroxy fatty acid.

Its subcellular location is the cell membrane. It carries out the reaction L-seryl-[protein] + ATP = O-phospho-L-seryl-[protein] + ADP + H(+). The enzyme catalyses L-threonyl-[protein] + ATP = O-phospho-L-threonyl-[protein] + ADP + H(+). Its function is as follows. Involved in chitin-triggered immune signaling and is required for reactive oxygen species (ROS) production. Acts downstream of SD129 in defense signaling triggered by the pathogen-associated molecular pattern (PAMP) 3-OH-C10:0, a medium-chain 3-hydroxy fatty acid. The polypeptide is Serine/threonine-protein kinase PBL36 (Arabidopsis thaliana (Mouse-ear cress)).